A 353-amino-acid polypeptide reads, in one-letter code: Photosystem II D2 protein (353 aa).

At Thr2 the chain carries N-acetylthreonine. Phosphothreonine is present on Thr2. A helical transmembrane segment spans residues 41 to 61 (CAYFALGGWFTGTTFVTSWYT). His118 lines the chlorophyll a pocket. The chain crosses the membrane as a helical span at residues 125–141 (GFMLRQFELARSVQLRP). Residues Gln130 and Asn143 each coordinate pheophytin a. The chain crosses the membrane as a helical span at residues 153-166 (VFVSVFLIYPLGQS). His198 provides a ligand contact to chlorophyll a. A helical membrane pass occupies residues 208–228 (AALLCAIHGATVENLYFEDGD). Residues His215 and Phe262 each coordinate a plastoquinone. His215 contacts Fe cation. Residue His269 coordinates Fe cation. Residues 279–295 (GLWMSALGVVGLALNLR) form a helical membrane-spanning segment.

Belongs to the reaction center PufL/M/PsbA/D family. As to quaternary structure, PSII is composed of 1 copy each of membrane proteins PsbA, PsbB, PsbC, PsbD, PsbE, PsbF, PsbH, PsbI, PsbJ, PsbK, PsbL, PsbM, PsbT, PsbX, PsbY, PsbZ, Psb30/Ycf12, at least 3 peripheral proteins of the oxygen-evolving complex and a large number of cofactors. It forms dimeric complexes. The D1/D2 heterodimer binds P680, chlorophylls that are the primary electron donor of PSII, and subsequent electron acceptors. It shares a non-heme iron and each subunit binds pheophytin, quinone, additional chlorophylls, carotenoids and lipids. There is also a Cl(-1) ion associated with D1 and D2, which is required for oxygen evolution. The PSII complex binds additional chlorophylls, carotenoids and specific lipids. is required as a cofactor.

Its subcellular location is the plastid. The protein resides in the chloroplast thylakoid membrane. The catalysed reaction is 2 a plastoquinone + 4 hnu + 2 H2O = 2 a plastoquinol + O2. Photosystem II (PSII) is a light-driven water:plastoquinone oxidoreductase that uses light energy to abstract electrons from H(2)O, generating O(2) and a proton gradient subsequently used for ATP formation. It consists of a core antenna complex that captures photons, and an electron transfer chain that converts photonic excitation into a charge separation. The D1/D2 (PsbA/PsbD) reaction center heterodimer binds P680, the primary electron donor of PSII as well as several subsequent electron acceptors. D2 is needed for assembly of a stable PSII complex. This is Photosystem II D2 protein from Panax ginseng (Korean ginseng).